A 154-amino-acid chain; its full sequence is Interleukin-2 (154 aa).

An N-terminal signal peptide occupies residues 1 to 20; it reads MYRMQLLSCIALSLALVTNS. Threonine 23 is a glycosylation site (O-linked (GalNAc...) threonine). The cysteines at positions 78 and 126 are disulfide-linked.

This sequence belongs to the IL-2 family.

It is found in the secreted. Its function is as follows. Cytokine produced by activated CD4-positive helper T-cells and to a lesser extend activated CD8-positive T-cells and natural killer (NK) cells that plays pivotal roles in the immune response and tolerance. Binds to a receptor complex composed of either the high-affinity trimeric IL-2R (IL2RA/CD25, IL2RB/CD122 and IL2RG/CD132) or the low-affinity dimeric IL-2R (IL2RB and IL2RG). Interaction with the receptor leads to oligomerization and conformation changes in the IL-2R subunits resulting in downstream signaling starting with phosphorylation of JAK1 and JAK3. In turn, JAK1 and JAK3 phosphorylate the receptor to form a docking site leading to the phosphorylation of several substrates including STAT5. This process leads to activation of several pathways including STAT, phosphoinositide-3-kinase/PI3K and mitogen-activated protein kinase/MAPK pathways. Functions as a T-cell growth factor and can increase NK-cell cytolytic activity as well. Promotes strong proliferation of activated B-cells and subsequently immunoglobulin production. Plays a pivotal role in regulating the adaptive immune system by controlling the survival and proliferation of regulatory T-cells, which are required for the maintenance of immune tolerance. Moreover, participates in the differentiation and homeostasis of effector T-cell subsets, including Th1, Th2, Th17 as well as memory CD8-positive T-cells. This Macaca fascicularis (Crab-eating macaque) protein is Interleukin-2 (IL2).